The sequence spans 229 residues: UPF0500 protein C1orf216 (229 aa).

Residues 1–144 form a disordered region; the sequence is MFAIQPGLAE…RGPGPPDPLL (144 aa). The span at 62-71 shows a compositional bias: polar residues; sequence SESPSDNQAF. 2 stretches are compositionally biased toward low complexity: residues 84–93 and 115–126; these read PPEGAEIPGA and SSSLSIDSRSSS.

It belongs to the UPF0500 family.

This Homo sapiens (Human) protein is UPF0500 protein C1orf216 (C1orf216).